The sequence spans 437 residues: Protein PhoH2 (437 aa).

A PINc domain is found at 7 to 134; the sequence is RTYVLDTSVL…LVSKDIPLRV (128 aa).

It in the N-terminal section; belongs to the PINc/VapC protein family. In the C-terminal section; belongs to the PhoH family. As to quaternary structure, interacts with antitoxin PhoAT. Requires Mg(2+) as cofactor.

It carries out the reaction n ATP + n H2O + wound RNA = n ADP + n phosphate + unwound RNA.. The enzyme catalyses ATP + H2O = ADP + phosphate + H(+). It catalyses the reaction GTP + H2O = GDP + phosphate + H(+). Toxic component of a type II toxin-antitoxin (TA) system. The possible cognate antitoxin is PhoAT; the toxin gene can be expressed in the absence of the antitoxin gene in an endogenous mc(2)155 double deletion. Unwinds and/or cleaves 5'-tailed RNA in vitro that starts with 5'-AC, the reaction requires hydrolyzable ATP; double-stranded (ds)RNA and dsDNA are not unwound or cleaved. Has ATPase and GTPase activities. In Mycolicibacterium smegmatis (strain ATCC 700084 / mc(2)155) (Mycobacterium smegmatis), this protein is Protein PhoH2.